Here is a 700-residue protein sequence, read N- to C-terminus: Protein kinase C, eye isozyme (700 aa).

2 Phorbol-ester/DAG-type zinc fingers span residues Gly-71 to Cys-121 and Lys-136 to Cys-186. Positions Asp-189–Tyr-310 constitute a C2 domain. Residues Asp-222, Asp-228, Asp-281, Asp-283, Ser-286, and Asp-289 each contribute to the Ca(2+) site. Residues Phe-371–Phe-629 form the Protein kinase domain. ATP is bound by residues Ile-377 to Val-385 and Lys-400. Asp-495 serves as the catalytic Proton acceptor. The 71-residue stretch at Arg-630–Ile-700 folds into the AGC-kinase C-terminal domain.

This sequence belongs to the protein kinase superfamily. AGC Ser/Thr protein kinase family. PKC subfamily. Requires Ca(2+) as cofactor. As to expression, exclusively expressed in photoreceptor cells.

The catalysed reaction is L-seryl-[protein] + ATP = O-phospho-L-seryl-[protein] + ADP + H(+). The enzyme catalyses L-threonyl-[protein] + ATP = O-phospho-L-threonyl-[protein] + ADP + H(+). This is a calcium-activated, phospholipid-dependent, serine- and threonine-specific enzyme. This isozyme is a negative regulator of the visual transduction cascade and has been shown to be required for photoreceptor cell inactivation and light adaptation. Negative regulation is dependent on interaction with scaffolding protein inaD. Acts in a hh-signaling pathway which regulates the Duox-dependent gut immune response to bacterial uracil; required for the activation of Cad99C and consequently Cad99C-dependent endosome formation, which is essential for the Duox-dependent production of reactive oxygen species (ROS) in response to intestinal bacterial infection. The sequence is that of Protein kinase C, eye isozyme (inaC) from Drosophila melanogaster (Fruit fly).